Consider the following 311-residue polypeptide: Transmembrane protein 177 (311 aa).

At 1-17 the chain is on the mitochondrial matrix side; that stretch reads MAGPLWRTAAFVQRHRT. A helical membrane pass occupies residues 18–38; that stretch reads GLLVGSCAGLFGVPISYHLFP. At 39–166 the chain is on the mitochondrial intermembrane side; it reads DPVVQWLYQY…EVVYLESSTT (128 aa). The chain crosses the membrane as a helical span at residues 167–187; sequence AVHALLAPACLAGTWALGVGA. The Mitochondrial matrix portion of the chain corresponds to 188 to 197; it reads KYTLGLHAGP. The helical transmembrane segment at 198 to 218 threads the bilayer; it reads MNLRAAFSLVAAVAGFVAYAF. Residues 219 to 311 are Mitochondrial intermembrane-facing; the sequence is SQDSLTHAVE…WRGMLNPGRS (93 aa).

Belongs to the TMEM177 family. In terms of assembly, found in a complex with COX20, COA6, MT-CO2/COX2, COX18, SCO1 and SCO2. Interacts with COX20. Interacts with COX1, MT-CO2/COX2, SCO1 and SCO2 in a COX20-dependent manner.

The protein resides in the mitochondrion inner membrane. Functionally, plays a role in the early steps of cytochrome c oxidase subunit II (MT-CO2/COX2) maturation and is required for the stabilization of COX20 and the newly synthesized MT-CO2/COX2 protein. This chain is Transmembrane protein 177 (TMEM177), found in Homo sapiens (Human).